The primary structure comprises 119 residues: Ribonuclease P protein component (119 aa).

The protein belongs to the RnpA family. As to quaternary structure, consists of a catalytic RNA component (M1 or rnpB) and a protein subunit.

It catalyses the reaction Endonucleolytic cleavage of RNA, removing 5'-extranucleotides from tRNA precursor.. Functionally, RNaseP catalyzes the removal of the 5'-leader sequence from pre-tRNA to produce the mature 5'-terminus. It can also cleave other RNA substrates such as 4.5S RNA. The protein component plays an auxiliary but essential role in vivo by binding to the 5'-leader sequence and broadening the substrate specificity of the ribozyme. This chain is Ribonuclease P protein component, found in Aromatoleum aromaticum (strain DSM 19018 / LMG 30748 / EbN1) (Azoarcus sp. (strain EbN1)).